Reading from the N-terminus, the 928-residue chain is G-protein coupled receptor family C group 6 member A (928 aa).

Positions Met1–Ser20 are cleaved as a signal peptide. The Extracellular portion of the chain corresponds to Cys21–Ala594. N-linked (GlcNAc...) asparagine glycans are attached at residues Asn332, Asn555, and Asn567. The helical transmembrane segment at Leu595–Phe615 threads the bilayer. The Cytoplasmic segment spans residues Thr616–Leu630. Residues Val631–Ile651 traverse the membrane as a helical segment. The Extracellular segment spans residues Gly652 to Ser669. A helical membrane pass occupies residues Phe670–Phe690. Over Asp691–Pro706 the chain is Cytoplasmic. Residues Ile707–Ala727 form a helical membrane-spanning segment. The Extracellular portion of the chain corresponds to Pro728 to Leu750. The chain crosses the membrane as a helical span at residues Ala751–Phe771. At Lys772–Lys784 the chain is on the cytoplasmic side. The helical transmembrane segment at Phe785 to Thr805 threads the bilayer. At Thr806–Leu812 the chain is on the extracellular side. Residues Pro813–Phe833 traverse the membrane as a helical segment. Over Pro834–Ile928 the chain is Cytoplasmic.

It belongs to the G-protein coupled receptor 3 family. As to quaternary structure, homodimer; disulfide-linked. Post-translationally, N-glycosylated. Expressed at high level in liver, lung, spleen and heart. Expressed at lower level in kidney, skeletal muscle and brain. Expressed in 7 dpc, 11 dpc, 15 dpc and 17 dpc embryos.

It is found in the cell membrane. Functionally, receptor activated by multiple ligands, including osteocalcin (BGLAP), basic amino acids, and various cations. Activated by amino acids with a preference for basic amino acids such as L-Lys, L-Arg and L-ornithine but also by small and polar amino acids. The L-alpha amino acids respond is augmented by divalent cations Ca(2+) and Mg(2+). Seems to act through a G(q)/G(11) and G(i)-coupled pathway. Regulates testosterone production by acting as a ligand for uncarboxylated osteocalcin hormone: osteocalcin-binding at the surface of Leydig cells initiates a signaling response that promotes the expression of enzymes required for testosterone synthesis in a CREB-dependent manner. Mediates the non-genomic effects of androgens in multiple tissue. May coordinate nutritional and hormonal anabolic signals through the sensing of extracellular amino acids, osteocalcin, divalent ions and its responsiveness to anabolic steroids. The chain is G-protein coupled receptor family C group 6 member A (Gprc6a) from Mus musculus (Mouse).